A 453-amino-acid polypeptide reads, in one-letter code: DNA repair protein RadA (453 aa).

The C4-type zinc finger occupies Cys10–Cys27. Residue Gly96–Ser103 participates in ATP binding. Positions Lys252–Gly256 match the RadA KNRFG motif motif. The segment at Asp351–Glu453 is lon-protease-like.

Belongs to the RecA family. RadA subfamily.

DNA-dependent ATPase involved in processing of recombination intermediates, plays a role in repairing DNA breaks. Stimulates the branch migration of RecA-mediated strand transfer reactions, allowing the 3' invading strand to extend heteroduplex DNA faster. Binds ssDNA in the presence of ADP but not other nucleotides, has ATPase activity that is stimulated by ssDNA and various branched DNA structures, but inhibited by SSB. Does not have RecA's homology-searching function. The sequence is that of DNA repair protein RadA from Pseudomonas aeruginosa (strain ATCC 15692 / DSM 22644 / CIP 104116 / JCM 14847 / LMG 12228 / 1C / PRS 101 / PAO1).